The sequence spans 702 residues: Elongation factor G (702 aa).

The 279-residue stretch at 8–286 (DKVRNIGIIA…AVVEYLPSPL (279 aa)) folds into the tr-type G domain. GTP-binding positions include 17–24 (AHIDAGKT), 85–89 (DTPGH), and 139–142 (NKMD).

It belongs to the TRAFAC class translation factor GTPase superfamily. Classic translation factor GTPase family. EF-G/EF-2 subfamily.

The protein resides in the cytoplasm. In terms of biological role, catalyzes the GTP-dependent ribosomal translocation step during translation elongation. During this step, the ribosome changes from the pre-translocational (PRE) to the post-translocational (POST) state as the newly formed A-site-bound peptidyl-tRNA and P-site-bound deacylated tRNA move to the P and E sites, respectively. Catalyzes the coordinated movement of the two tRNA molecules, the mRNA and conformational changes in the ribosome. This Chloroflexus aggregans (strain MD-66 / DSM 9485) protein is Elongation factor G.